The sequence spans 581 residues: Ketol-acid reductoisomerase, chloroplastic (581 aa).

Residues 1–50 (MAAVTSSCSTAISASSKTLAKPVAASFAPTNLSFSKLSPQSIRARRSITV) constitute a chloroplast transit peptide. The 199-residue stretch at 92 to 290 (VRGGRDLFHL…ALGSPFTFAT (199 aa)) folds into the KARI N-terminal Rossmann domain. Residues 113-120 (GVIGWGSQ), 146-151 (RKGSSS), and 185-189 (SDSAQ) each bind NADP(+). Residue His210 is part of the active site. KARI C-terminal knotted domains lie at 291–439 (TLEQ…RPAG) and 440–576 (DLGP…RPEL). Mg(2+)-binding residues include Asp299, Glu303, Glu476, and Glu480. A substrate-binding site is contributed by Ser502.

The protein belongs to the ketol-acid reductoisomerase family. In terms of assembly, homodimer. It depends on Mg(2+) as a cofactor.

The protein localises to the plastid. The protein resides in the chloroplast. It carries out the reaction (2R)-2,3-dihydroxy-3-methylbutanoate + NADP(+) = (2S)-2-acetolactate + NADPH + H(+). The enzyme catalyses (2R,3R)-2,3-dihydroxy-3-methylpentanoate + NADP(+) = (S)-2-ethyl-2-hydroxy-3-oxobutanoate + NADPH + H(+). Its pathway is amino-acid biosynthesis; L-isoleucine biosynthesis; L-isoleucine from 2-oxobutanoate: step 2/4. The protein operates within amino-acid biosynthesis; L-valine biosynthesis; L-valine from pyruvate: step 2/4. The protein is Ketol-acid reductoisomerase, chloroplastic (PGAAIR) of Pisum sativum (Garden pea).